A 122-amino-acid chain; its full sequence is Small ribosomal subunit protein uS13 (122 aa).

Positions 93-122 are disordered; the sequence is RRGLPVRGQKTKTNARTRKGPKKTIANKKK.

It belongs to the universal ribosomal protein uS13 family. As to quaternary structure, part of the 30S ribosomal subunit. Forms a loose heterodimer with protein S19. Forms two bridges to the 50S subunit in the 70S ribosome.

Functionally, located at the top of the head of the 30S subunit, it contacts several helices of the 16S rRNA. In the 70S ribosome it contacts the 23S rRNA (bridge B1a) and protein L5 of the 50S subunit (bridge B1b), connecting the 2 subunits; these bridges are implicated in subunit movement. Contacts the tRNAs in the A and P-sites. In Clostridium beijerinckii (strain ATCC 51743 / NCIMB 8052) (Clostridium acetobutylicum), this protein is Small ribosomal subunit protein uS13.